The sequence spans 248 residues: tRNA uridine(34) hydroxylase (248 aa).

A Rhodanese domain is found at Arg127–Tyr221. Catalysis depends on Cys181, which acts as the Cysteine persulfide intermediate.

This sequence belongs to the TrhO family.

It catalyses the reaction uridine(34) in tRNA + AH2 + O2 = 5-hydroxyuridine(34) in tRNA + A + H2O. Catalyzes oxygen-dependent 5-hydroxyuridine (ho5U) modification at position 34 in tRNAs. This Xanthomonas euvesicatoria pv. vesicatoria (strain 85-10) (Xanthomonas campestris pv. vesicatoria) protein is tRNA uridine(34) hydroxylase.